A 72-amino-acid polypeptide reads, in one-letter code: Large ribosomal subunit protein eL40 (72 aa).

It belongs to the eukaryotic ribosomal protein eL40 family.

The chain is Large ribosomal subunit protein eL40 from Nicotiana tabacum (Common tobacco).